Reading from the N-terminus, the 260-residue chain is Transcription factor SUM-1 (260 aa).

The 52-residue stretch at 112–163 folds into the bHLH domain; that stretch reads DKRKAATLRERRRLRKVNEAFEALKRHTCANPNQRLPKVEILRNAIEYIEKL. A disordered region spans residues 171–208; it reads KANGDSEMDSAETSSNTSDAMTDGSSPGSYSSDKAQQY. The segment covering 181-205 has biased composition (polar residues); the sequence is AETSSNTSDAMTDGSSPGSYSSDKA.

As to quaternary structure, efficient DNA binding requires dimerization with another bHLH protein. Homodimer, and heterodimer with the ubiquitous bHLH protein E12.

The protein resides in the nucleus. Its function is as follows. Regulatory factor during embryogenesis. Conversion of pluripotent secondary mesenchyme cells to myogenic cells. It binds to the MCK enhancer element. This Lytechinus variegatus (Green sea urchin) protein is Transcription factor SUM-1 (SUM-1).